A 245-amino-acid chain; its full sequence is Mitochondrial import inner membrane translocase subunit Tim21 (245 aa).

The N-terminal 18 residues, 1–18 (MICAFLRVVRHAEKLHGS), are a transit peptide targeting the mitochondrion. Residues 64 to 97 (FWTQGPDPRKAKEDSSKQVSINRNQREETGVSTS) form a disordered region. Residues 70–79 (DPRKAKEDSS) are compositionally biased toward basic and acidic residues. A helical membrane pass occupies residues 108–128 (TYLIVVLFGVSITGSLLYTIF).

It belongs to the TIM21 family. In terms of assembly, component of the TIM23 complex. Component of the MITRAC (mitochondrial translation regulation assembly intermediate of cytochrome c oxidase complex) complex, the core components of this complex being COA3/MITRAC12 and COX14. Interacts with COA3 and MT-CO1/COX1.

The protein resides in the mitochondrion membrane. In terms of biological role, participates in the translocation of transit peptide-containing proteins across the mitochondrial inner membrane. Also required for assembly of mitochondrial respiratory chain complex I and complex IV as component of the MITRAC (mitochondrial translation regulation assembly intermediate of cytochrome c oxidase complex) complex. Probably shuttles between the presequence translocase and respiratory-chain assembly intermediates in a process that promotes incorporation of early nuclear-encoded subunits into these complexes. In Rattus norvegicus (Rat), this protein is Mitochondrial import inner membrane translocase subunit Tim21 (Timm21).